Reading from the N-terminus, the 126-residue chain is Glycine cleavage system H protein (126 aa).

The 82-residue stretch at T24–K105 folds into the Lipoyl-binding domain. The residue at position 65 (K65) is an N6-lipoyllysine.

This sequence belongs to the GcvH family. As to quaternary structure, the glycine cleavage system is composed of four proteins: P, T, L and H. (R)-lipoate is required as a cofactor.

The glycine cleavage system catalyzes the degradation of glycine. The H protein shuttles the methylamine group of glycine from the P protein to the T protein. This is Glycine cleavage system H protein from Burkholderia cenocepacia (strain HI2424).